Here is a 59-residue protein sequence, read N- to C-terminus: MAVQQNKKSPSKRGMHRSHDFLTAAPLAVEPSTGEVHLRHHISPNGYYRGKKVVKTKND.

Residues 1 to 23 (MAVQQNKKSPSKRGMHRSHDFLT) are disordered.

It belongs to the bacterial ribosomal protein bL32 family.

The protein is Large ribosomal subunit protein bL32 of Burkholderia multivorans (strain ATCC 17616 / 249).